The chain runs to 109 residues: Oncomodulin-2 (109 aa).

EF-hand domains are found at residues 39–74 (MSAS…FESG) and 78–109 (LTES…MVHS). Asp-52, Asp-54, Ser-56, Tyr-58, Glu-63, Asp-91, Asp-93, Asp-95, Lys-97, and Glu-102 together coordinate Ca(2+).

This sequence belongs to the parvalbumin family.

The chain is Oncomodulin-2 (OCM2) from Homo sapiens (Human).